The following is a 316-amino-acid chain: Lipoyl synthase (316 aa).

[4Fe-4S] cluster-binding residues include Cys66, Cys71, Cys77, Cys92, Cys96, Cys99, and Ser306. In terms of domain architecture, Radical SAM core spans 78 to 295 (YSQQTATFMV…ADIAKSMGFK (218 aa)).

The protein belongs to the radical SAM superfamily. Lipoyl synthase family. The cofactor is [4Fe-4S] cluster.

It is found in the cytoplasm. It carries out the reaction [[Fe-S] cluster scaffold protein carrying a second [4Fe-4S](2+) cluster] + N(6)-octanoyl-L-lysyl-[protein] + 2 oxidized [2Fe-2S]-[ferredoxin] + 2 S-adenosyl-L-methionine + 4 H(+) = [[Fe-S] cluster scaffold protein] + N(6)-[(R)-dihydrolipoyl]-L-lysyl-[protein] + 4 Fe(3+) + 2 hydrogen sulfide + 2 5'-deoxyadenosine + 2 L-methionine + 2 reduced [2Fe-2S]-[ferredoxin]. The protein operates within protein modification; protein lipoylation via endogenous pathway; protein N(6)-(lipoyl)lysine from octanoyl-[acyl-carrier-protein]: step 2/2. Catalyzes the radical-mediated insertion of two sulfur atoms into the C-6 and C-8 positions of the octanoyl moiety bound to the lipoyl domains of lipoate-dependent enzymes, thereby converting the octanoylated domains into lipoylated derivatives. The chain is Lipoyl synthase from Rhodopirellula baltica (strain DSM 10527 / NCIMB 13988 / SH1).